The chain runs to 69 residues: Pleurain-A3 (69 aa).

Positions 1–22 (MFTLKKTLLLLFFLGTISISLC) are cleaved as a signal peptide. A propeptide spanning residues 23–43 (KQARDADEDDGRKMTEEEVKR) is cleaved from the precursor. C63 and C69 form a disulfide bridge.

This sequence belongs to the frog skin active peptide (FSAP) family. Pleurain subfamily. As to expression, expressed by the skin glands.

The protein localises to the secreted. Its function is as follows. Antimicrobial peptide. Has activity against Gram-positive and -negative bacteria, and fungi. Has little hemolytic activity on red blood cells. The polypeptide is Pleurain-A3 (Nidirana pleuraden (Yunnan pond frog)).